We begin with the raw amino-acid sequence, 546 residues long: NAD(P)H-quinone oxidoreductase chain 4 (546 aa).

14 helical membrane-spanning segments follow: residues 24 to 44, 56 to 76, 108 to 128, 132 to 152, 156 to 176, 188 to 208, 232 to 252, 263 to 283, 297 to 317, 326 to 346, 352 to 372, 396 to 416, 437 to 457, and 484 to 504; these read FPWLSVSILFPIGCAFLIPFF, FALSVALITFLVTVGSYINGF, MPLILLTSFITALAVLAAWPV, PKLFFFLILIMDGGQIAVFAV, LLFFLSWELELLPVYLLLAIW, FIIYTAGSSIFILLAALAMGF, ILCYIGLLIAFGVKLPIVPLH, TAPVHMLLAGILLKMGGYALL, FSPLLIVLGVVNIIYAALTSF, IAYSSISHMGFVLIGIGSFSS, AMLQMVSHGLIGASLFFLVGA, FALWTACSLASLALPGMSGFV, VIMASLAAIGVILTPIYLLSM, and IYIIACLLLPIIGIGLYPRLV.

It belongs to the complex I subunit 4 family.

Its subcellular location is the cellular thylakoid membrane. The enzyme catalyses a plastoquinone + NADH + (n+1) H(+)(in) = a plastoquinol + NAD(+) + n H(+)(out). The catalysed reaction is a plastoquinone + NADPH + (n+1) H(+)(in) = a plastoquinol + NADP(+) + n H(+)(out). Its function is as follows. NDH-1 shuttles electrons from NAD(P)H, via FMN and iron-sulfur (Fe-S) centers, to quinones in the respiratory chain. The immediate electron acceptor for the enzyme in this species is believed to be plastoquinone. Couples the redox reaction to proton translocation (for every two electrons transferred, four hydrogen ions are translocated across the cytoplasmic membrane), and thus conserves the redox energy in a proton gradient. In Prochlorococcus marinus subsp. pastoris (strain CCMP1986 / NIES-2087 / MED4), this protein is NAD(P)H-quinone oxidoreductase chain 4.